Consider the following 494-residue polypeptide: MARAAPLLAALTALLAAAAAGGDAPPGKIAVVGAGIGGSAVAHFLQQHFGPRVQIDVYEKGTVGGRLATISVNKQHYESGAASFHSLSLHMQDFVKLLGLRHRREVVGRSAIFGGEHFMLEETDWYLLNLFRLWWHYGISFLRLQMWVEEVMEKFMRIYKYQAHGYAFSGVEELLYSLGESTFVNMTQHSVAESLLQVGVTQRFIDDVVSAVLRASYGQSAAMPAFAGAMSLAGAQGSLWSVEGGNKLVCSGLLKLTKANVIHATVTSVTLHSTEGKALYQVAYENEVGNSSDFYDIVVIATPLHLDNSSSNLTFAGFHPPIDDVQGSFQPTVVSLVHGYLNSSYFGFPDPKLFPFANILTTDFPSFFCTLDNICPVNISASFRRKQPQEAAVWRVQSPKPLFRTQLKTLFRSYYSVQTAEWQAHPLYGSRPTLPRFALHDQLFYLNALEWAASSVEVMAVAAKNVALLAYNRWYQDLDKIDQKDLMHKVKTEL.

A signal peptide spans 1 to 22 (MARAAPLLAALTALLAAAAAGG). An N-linked (GlcNAc...) asparagine glycan is attached at Asn342.

The protein belongs to the prenylcysteine oxidase family. FAD serves as cofactor.

Its subcellular location is the secreted. Its function is as follows. Likely to have oxidoreductase activity. Required in the mevalonate pathway to regulate prenylation and enhances the bactericidal activity of neutrophils. The polypeptide is Prenylcysteine oxidase 1-like (PCYOX1L) (Homo sapiens (Human)).